The primary structure comprises 255 residues: Type III pantothenate kinase (255 aa).

Aspartate 7–lysine 14 lines the ATP pocket. Residues tyrosine 96 and glycine 103–arginine 106 contribute to the substrate site. Aspartate 105 (proton acceptor) is an active-site residue. Threonine 133 serves as a coordination point for ATP. Threonine 183 provides a ligand contact to substrate.

The protein belongs to the type III pantothenate kinase family. In terms of assembly, homodimer. Requires NH4(+) as cofactor. K(+) serves as cofactor.

The protein localises to the cytoplasm. The catalysed reaction is (R)-pantothenate + ATP = (R)-4'-phosphopantothenate + ADP + H(+). The protein operates within cofactor biosynthesis; coenzyme A biosynthesis; CoA from (R)-pantothenate: step 1/5. In terms of biological role, catalyzes the phosphorylation of pantothenate (Pan), the first step in CoA biosynthesis. The protein is Type III pantothenate kinase of Polaromonas sp. (strain JS666 / ATCC BAA-500).